A 322-amino-acid chain; its full sequence is Short chain dehydrogenase AOL_s00215g274 (322 aa).

Residues 47–48, 104–106, 197–201, and 230–232 contribute to the NAD(+) site; these read AV, IAV, YNVSK, and VAT. Tyrosine 197 acts as the Proton acceptor in catalysis.

This sequence belongs to the short-chain dehydrogenases/reductases (SDR) family.

It functions in the pathway secondary metabolite biosynthesis; terpenoid biosynthesis. Short chain dehydrogenase; part of the gene cluster that mediates the biosynthesis of sesquiterpenyl epoxy-cyclohexenoids (SECs) such as anthrobotrisins and arthrosporols, metabolites that possess a novel hybrid carbon skeleton consisting of a polyketide-derived epoxycyclohexenol combined with a terpenoid-derived monocyclic sesquiterpenol substructure (PKS-PTS hybrid). The SEC pathway plays an important role for fungal soil colonization via decreasing fungal nematode-capturing ability. Within the pathway, the cytochrome P450 monooxygenase AOL_s00215g274 is involved in specific regional ketone reductions at C-4 of farnesyl epoxy-quinone. The pathway begins with the biosynthesis of 6-methylsalicylic acid (6-MSA), the first precursor of the polyketide-derived epoxycyclohexenol in arthrosporols, by the polyketide synthase (PKS) AOL_s00215g283 via condensation of 1 acetate and 3 malonate units. The 6-methylsalicylic acid decarboxylase AOL_s00215g281 then catalyzes the decarboxylation of 6-methylsalicylic acid to yield m-cresol. The cytochrome P450 monooxygenase AOL_s00215g282 further oxidizes m-cresol to yield toluquinol. With the assistance of the oxidoreductase AOL_s00215g277, the polyprenyl transferase AOL_s00215g276 catalyzes the farnesylation of toluquinol to produce farnesyl hydroquinone, the hybrid precursor for biosynthesis of SECs. Farnesyl hydroquinone undergoes epoxidation and then subsequent dehydrogenation to form farnesyl epoxy-quinone, the first and simplest SEC. The cytochrome P450 monooxygenase AOL_s00215g278 and the FAD-dependent monooxygenase AOL_s00215g279 might be involved in the oxygenation of the phenol moiety, most likely in the epoxy formation. The cytochrome P450 monooxygenases AOL_s00215g274 and AOL_s00215g280 are involved in specific regional ketone reductions at respectively C-4 and C-1 of farnesyl epoxy-quinone PubMed:33823587. This chain is Short chain dehydrogenase AOL_s00215g274, found in Arthrobotrys oligospora (strain ATCC 24927 / CBS 115.81 / DSM 1491) (Nematode-trapping fungus).